Reading from the N-terminus, the 208-residue chain is FMRFamide-like neuropeptide 18 (208 aa).

A signal peptide spans methionine 1 to alanine 21. Residues tyrosine 22 to glutamine 83 constitute a propeptide that is removed on maturation. At phenylalanine 93 the chain carries Phenylalanine amide. A propeptide spanning residues alanine 97 to glutamate 101 is cleaved from the precursor. At phenylalanine 111 the chain carries Phenylalanine amide. A propeptide spanning residues serine 115–glutamate 119 is cleaved from the precursor. Phenylalanine 129 is subject to Phenylalanine amide. A propeptide spanning residues aspartate 133–aspartate 137 is cleaved from the precursor. Residue phenylalanine 147 is modified to Phenylalanine amide. The propeptide occupies aspartate 151 to aspartate 158. Phenylalanine amide is present on residues phenylalanine 169 and phenylalanine 180. Positions serine 184–leucine 195 are excised as a propeptide. The residue at position 205 (phenylalanine 205) is a Phenylalanine amide.

Belongs to the FARP (FMRFamide related peptide) family. In terms of processing, may be processed by convertase egl-3. In terms of tissue distribution, expressed in head neurons and weakly in ventral nerve cord. Expressed in the interneurons AVA, AIY and RIG, the motor neuron RIM and the pharyngeal neurons M2 and M3. EMPGVLRF-amide: Expressed in cholinergic pharyngeal motoneurons M2 and M3.

Its subcellular location is the secreted. Functionally, FMRFamide-like neuropeptides. Ligand to G-protein coupled receptor npr-1. Involved in modulating locomotion quiescence during the sleep-like state called lethargus which occurs during molting between larval and adult stages, acting via npr-1. Together with flp-1, plays a homeostatic role by acting on the GABAergic neural transmission at neuromuscular junctions to prevent overexcitation of the locomotor circuit. Plays a role in the navigational capacity of sperm and the targeting of sperm derived from males to the fertilization site in the uterus of hermaphrodites. SVPGVLRF-amide: Excites muscle tension. In terms of biological role, activates the G-protein coupled receptor npr-1 more effectively than other flp-18 peptides. Inhibits the activity of dissected pharyngeal myogenic muscle system. This Caenorhabditis elegans protein is FMRFamide-like neuropeptide 18.